The sequence spans 492 residues: Stomatal closure-related actin-binding protein 2 (492 aa).

Residues 112 to 132 adopt a coiled-coil conformation; the sequence is LKKLRDALETMRGRMDGRNRE.

This sequence belongs to the SCAB family. As to expression, expressed in roots, stems, leaves, siliques and flowers.

The protein localises to the cytoplasm. The protein resides in the cytoskeleton. In terms of biological role, probable plant-specific actin binding protein that bundles and stabilizes microfilaments (MFs). This Arabidopsis thaliana (Mouse-ear cress) protein is Stomatal closure-related actin-binding protein 2.